Consider the following 2410-residue polypeptide: Genome polyprotein 1 (2410 aa).

The interval 1–22 is disordered; sequence MEQTLAQAVSRKSKTDTPMAEE. Residues 474-632 enclose the Helicase ATP-binding domain; sequence KMADANNCWS…AARKYPLHVE (159 aa). ATP is bound at residue 487–494; that stretch reads GHTGSGKS. In terms of domain architecture, Helicase C-terminal spans 647-813; sequence GGGDLLDISK…NVPFYMNETF (167 aa). Tyr-1234 bears the O-(5'-phospho-RNA)-tyrosine mark. The region spanning 1359-1573 is the Peptidase C4 domain; sequence ITLEASTGIL…CGYASHTALF (215 aa). Residues His-1404, Asp-1440, and Cys-1507 each act as for nuclear inclusion protein A activity in the active site. Residues 1857-1980 enclose the RdRp catalytic domain; that stretch reads WLHGSGDGSR…AISPQFDEEF (124 aa). Residues 2173–2200 are disordered; that stretch reads TRTPTEDDGKLKTPSGARIPSSAADGNW.

It belongs to the bymoviruses polyprotein 1 family. Post-translationally, VPg is uridylylated by the polymerase and is covalently attached to the 5'-end of the genomic RNA. This uridylylated form acts as a nucleotide-peptide primer for the polymerase. The viral RNA1 of bymoviruses is expressed as a single polyprotein which undergoes post-translational proteolytic processing by the main proteinase NIa-pro resulting in the production of at least eight individual proteins.

It localises to the host cytoplasmic vesicle. The protein localises to the virion. The enzyme catalyses RNA(n) + a ribonucleoside 5'-triphosphate = RNA(n+1) + diphosphate. The catalysed reaction is Hydrolyzes glutaminyl bonds, and activity is further restricted by preferences for the amino acids in P6 - P1' that vary with the species of potyvirus, e.g. Glu-Xaa-Xaa-Tyr-Xaa-Gln-|-(Ser or Gly) for the enzyme from tobacco etch virus. The natural substrate is the viral polyprotein, but other proteins and oligopeptides containing the appropriate consensus sequence are also cleaved.. In terms of biological role, indispensable for virus replication. Mediates the cap-independent, EIF4E-dependent translation of viral genomic RNAs. Binds to the cap-binding site of host EIF4E and thus interferes with the host EIF4E-dependent mRNA export and translation. VPg-RNA directly binds EIF4E and is a template for transcription. Also forms trimeric complexes with EIF4E-EIF4G, which are templates for translation. Functionally, has RNA-binding and proteolytic activities. Its function is as follows. An RNA-dependent RNA polymerase that plays an essential role in the virus replication. The polypeptide is Genome polyprotein 1 (Hordeum vulgare (Barley)).